Here is a 75-residue protein sequence, read N- to C-terminus: Rugosin-LK1 (75 aa).

Residues 1-22 (MFTMKKSLLFLFFLGTISLSFC) form the signal peptide. The propeptide occupies 23–40 (EEERSADEDDEGEMTEEE).

In terms of tissue distribution, expressed by the skin glands.

The protein localises to the secreted. Functionally, has antimicrobial activity against Gram-positive bacteria S.aureus ATCC 2592 (MIC=10.0 uM), S.aureus ATCC 43300 (MIC=15.0 uM) and B.subtilis (MIC=40.0 uM), against Gram-negative bacteria E.coli ML-35P (MIC=10.0 uM), P.aeruginosa PA01 (MIC=5.0 uM) and P.aeruginosa ATCC 27853 (MIC=5.0 uM) and against fungus C.albicans ATCC 2002 (MIC=10.0 uM). In Limnonectes kuhlii (Kuhl's Creek frog), this protein is Rugosin-LK1.